Here is a 474-residue protein sequence, read N- to C-terminus: 3-isopropylmalate dehydratase large subunit (474 aa).

Residues cysteine 350, cysteine 411, and cysteine 414 each coordinate [4Fe-4S] cluster.

Belongs to the aconitase/IPM isomerase family. LeuC type 1 subfamily. Heterodimer of LeuC and LeuD. It depends on [4Fe-4S] cluster as a cofactor.

The enzyme catalyses (2R,3S)-3-isopropylmalate = (2S)-2-isopropylmalate. It participates in amino-acid biosynthesis; L-leucine biosynthesis; L-leucine from 3-methyl-2-oxobutanoate: step 2/4. Functionally, catalyzes the isomerization between 2-isopropylmalate and 3-isopropylmalate, via the formation of 2-isopropylmaleate. This is 3-isopropylmalate dehydratase large subunit from Hydrogenovibrio crunogenus (strain DSM 25203 / XCL-2) (Thiomicrospira crunogena).